Here is a 313-residue protein sequence, read N- to C-terminus: tRNA dimethylallyltransferase (313 aa).

An ATP-binding site is contributed by 11–18; it reads GPTAAGKS. 13 to 18 is a binding site for substrate; that stretch reads TAAGKS. Interaction with substrate tRNA regions lie at residues 36-39, 160-164, and 244-249; these read DSAT, QRIQR, and RCVGYR.

The protein belongs to the IPP transferase family. Monomer. Mg(2+) serves as cofactor.

It catalyses the reaction adenosine(37) in tRNA + dimethylallyl diphosphate = N(6)-dimethylallyladenosine(37) in tRNA + diphosphate. Catalyzes the transfer of a dimethylallyl group onto the adenine at position 37 in tRNAs that read codons beginning with uridine, leading to the formation of N6-(dimethylallyl)adenosine (i(6)A). The protein is tRNA dimethylallyltransferase of Bordetella pertussis (strain Tohama I / ATCC BAA-589 / NCTC 13251).